The sequence spans 437 residues: Transcription factor TGAL5 (437 aa).

The tract at residues 33-75 (QEPYSNSQSVGSTTDSSSAQNTMSQAELVSPASMRSDSGQEQQ) is disordered. Over residues 37 to 50 (SNSQSVGSTTDSSS) the composition is skewed to low complexity. The span at 51–75 (AQNTMSQAELVSPASMRSDSGQEQQ) shows a compositional bias: polar residues. In terms of domain architecture, bZIP spans 126–170 (DAKTERRLAQNREAARKSRLRKKAYVQQLETSRIRLQQIEQELQR). The segment at 128–148 (KTERRLAQNREAARKSRLRKK) is basic motif. Residues 154–168 (LETSRIRLQQIEQEL) form a leucine-zipper region. Residues 191 to 405 (AVMFDMDYTR…RALSSLWASR (215 aa)) form the DOG1 domain.

The protein belongs to the bZIP family. In terms of assembly, interacts with NPR5/NH4, NH5.1 and NH5.2.

The protein localises to the nucleus. Its function is as follows. Transcriptional regulator involved in defense response. This is Transcription factor TGAL5 from Oryza sativa subsp. japonica (Rice).